The chain runs to 89 residues: ATP synthase subunit e, mitochondrial (89 aa).

S1 is modified (N-acetylserine). The chain crosses the membrane as a helical span at residues 8–25 (YSSLAAGIVYGAYHTYTL).

In terms of assembly, F-type ATP synthases have 2 components, the catalytic core F(1) and the membrane-embedded component F(0), linked together by a central stalk and a peripheral stalk. The central stalk, also called rotor shaft, is often seen as part of F(1). The peripheral stalk is seen as part of F(0). F(0) contains the membrane channel next to the rotor. F-type ATP synthases form dimers but each monomer functions independently in ATP generation. The dimer consists of 18 different polypeptides: ATP1 (subunit alpha, part of F(1), 3 molecules per monomer), ATP2 (subunit beta, part of F(1), 3 molecules per monomer), ATP3 (subunit gamma, part of the central stalk), ATP4 (subunit b, part of the peripheral stalk), ATP5/OSCP (subunit 5/OSCP, part of the peripheral stalk), ATP6 (subunit a, part of the peripheral stalk), ATP7 (subunit d, part of the peripheral stalk), ATP8 (subunit 8, part of the peripheral stalk), OLI1 (subunit c, part of the rotor, 10 molecules per monomer), ATP14 (subunit h, part of the peripheral stalk), ATP15 (subunit epsilon, part of the central stalk), ATP16 (subunit delta, part of the central stalk), ATP17 (subunit f, part of the peripheral stalk), ATP18 (subunit i/j, part of the peripheral stalk). Dimer-specific subunits are ATP19 (subunit k, at interface between monomers), ATP20 (subunit g, at interface between monomers), TIM11 (subunit e, at interface between monomers). Also contains subunit L.

It is found in the mitochondrion inner membrane. Functionally, mitochondrial membrane ATP synthase (F(1)F(0) ATP synthase or Complex V) produces ATP from ADP in the presence of a proton gradient across the membrane which is generated by electron transport complexes of the respiratory chain. F-type ATP synthases consist of two structural domains, F(1) - containing the extramembraneous catalytic core, and F(0) - containing the membrane proton channel, linked together by a central stalk and a peripheral stalk. During catalysis, ATP synthesis in the catalytic domain of F(1) is coupled via a rotary mechanism of the central stalk subunits to proton translocation. Part of the complex F(0) domain. Minor subunit located with subunit a/ATP6 in the membrane. Together with subunit g/ATP20, probably contributes to membrane curvature at the site of the ATP synthase dimer, ultimately contributing to formation of cristae. The chain is ATP synthase subunit e, mitochondrial from Pichia angusta (Yeast).